A 338-amino-acid polypeptide reads, in one-letter code: Glycerol-3-phosphate dehydrogenase [NAD(P)+] (338 aa).

4 residues coordinate NADPH: Ser12, Trp13, Arg33, and Lys110. The sn-glycerol 3-phosphate site is built by Lys110, Gly141, and Ser143. Residue Ala145 coordinates NADPH. Sn-glycerol 3-phosphate contacts are provided by Lys196, Asp249, Ser259, Arg260, and Asn261. Lys196 acts as the Proton acceptor in catalysis. NADPH is bound at residue Arg260. The NADPH site is built by Val284 and Glu286.

It belongs to the NAD-dependent glycerol-3-phosphate dehydrogenase family.

It is found in the cytoplasm. The catalysed reaction is sn-glycerol 3-phosphate + NAD(+) = dihydroxyacetone phosphate + NADH + H(+). It carries out the reaction sn-glycerol 3-phosphate + NADP(+) = dihydroxyacetone phosphate + NADPH + H(+). Its pathway is membrane lipid metabolism; glycerophospholipid metabolism. Its function is as follows. Catalyzes the reduction of the glycolytic intermediate dihydroxyacetone phosphate (DHAP) to sn-glycerol 3-phosphate (G3P), the key precursor for phospholipid synthesis. The protein is Glycerol-3-phosphate dehydrogenase [NAD(P)+] of Limosilactobacillus reuteri (strain DSM 20016) (Lactobacillus reuteri).